The sequence spans 220 residues: LHFPL tetraspan subfamily member 1 protein (220 aa).

Positions 1–20 (MRNSLTMVGTFWAFLSLVTA) are cleaved as a signal peptide. The next 2 helical transmembrane spans lie at 86-106 (VVTG…VLGC) and 122-142 (AAQF…PLGW). N-linked (GlcNAc...) asparagine glycosylation is present at Asn153. The chain crosses the membrane as a helical span at residues 165–185 (LGWAYYCAGGGAAAAMLICTW).

It belongs to the LHFP family. In terms of tissue distribution, widely expressed. Strongly expressed in vagina and ovary. Weakly expressed in spleen, kidney, thymus, testis, brain, lung, intestine and uterus.

It is found in the membrane. The sequence is that of LHFPL tetraspan subfamily member 1 protein from Mus musculus (Mouse).